A 441-amino-acid polypeptide reads, in one-letter code: MEQPQEEAPEVREEEEKEEVAEAEGAPELNGGPQHALPSSSYTDLSRSSSPPSLLDQLQMGCDGASCGSLNMECRVCGDKASGFHYGVHACEGCKGFFRRTIRMKLEYEKCERSCKIQKKNRNKCQYCRFQKCLALGMSHNAIRFGRMPEAEKRKLVAGLTANEGSQYNPQVADLKAFSKHIYNAYLKNFNMTKKKARSILTGKASHTAPFVIHDIETLWQAEKGLVWKQLVNGLPPYKEISVHVFYRCQCTTVETVRELTEFAKSIPSFSSLFLNDQVTLLKYGVHEAIFAMLASIVNKDGLLVANGSGFVTREFLRSLRKPFSDIIEPKFEFAVKFNALELDDSDLALFIAAIILCGDRPGLMNVPRVEAIQDTILRALEFHLQANHPDAQYLFPKLLQKMADLRQLVTEHAQMMQRIKKTETETSLHPLLQEIYKDMY.

The segment covering 1 to 22 (MEQPQEEAPEVREEEEKEEVAE) has biased composition (acidic residues). The tract at residues 1–54 (MEQPQEEAPEVREEEEKEEVAEAEGAPELNGGPQHALPSSSYTDLSRSSSPPSL) is disordered. Residues 37–54 (LPSSSYTDLSRSSSPPSL) show a composition bias toward low complexity. Positions 71–145 (NMECRVCGDK…LGMSHNAIRF (75 aa)) form a DNA-binding region, nuclear receptor. 2 NR C4-type zinc fingers span residues 74–94 (CRVC…CEGC) and 111–133 (CERS…FQKC). Positions 211 to 439 (FVIHDIETLW…HPLLQEIYKD (229 aa)) constitute an NR LBD domain.

The protein belongs to the nuclear hormone receptor family. NR1 subfamily. As to quaternary structure, heterodimer with the retinoid X receptor. Interacts (via domain NR LBD) with CRY1 and CRY2 in a ligand-dependent manner. Post-translationally, 'Lys-48'-linked polyubiquitinated; leading to proteasomal degradation. Deubiquitinated and stabilized by OTUD3. Ubiquitous with maximal levels in placenta and skeletal muscle.

The protein resides in the nucleus. Functionally, ligand-activated transcription factor key mediator of energy metabolism in adipose tissues. Receptor that binds peroxisome proliferators such as hypolipidemic drugs and fatty acids. Has a preference for poly-unsaturated fatty acids, such as gamma-linoleic acid and eicosapentanoic acid. Once activated by a ligand, the receptor binds to promoter elements of target genes. Regulates the peroxisomal beta-oxidation pathway of fatty acids. Functions as transcription activator for the acyl-CoA oxidase gene. Decreases expression of NPC1L1 once activated by a ligand. The sequence is that of Peroxisome proliferator-activated receptor delta from Homo sapiens (Human).